Reading from the N-terminus, the 389-residue chain is Tyrosine aminotransferase (389 aa).

Residue lysine 242 is modified to N6-(pyridoxal phosphate)lysine.

This sequence belongs to the class-I pyridoxal-phosphate-dependent aminotransferase family. Homodimer. It depends on pyridoxal 5'-phosphate as a cofactor.

It carries out the reaction L-tyrosine + 2-oxoglutarate = 3-(4-hydroxyphenyl)pyruvate + L-glutamate. It participates in amino-acid degradation; L-phenylalanine degradation; acetoacetate and fumarate from L-phenylalanine: step 2/6. Its function is as follows. Transaminase involved in tyrosine breakdown. Converts tyrosine to p-hydroxyphenylpyruvate. The sequence is that of Tyrosine aminotransferase (tatA) from Rhizobium meliloti (strain 1021) (Ensifer meliloti).